A 330-amino-acid polypeptide reads, in one-letter code: GMP reductase (330 aa).

Residue cysteine 180 is the Thioimidate intermediate of the active site. Residue 209-232 (LIADGGIRHNGDIAKSVRFGASMV) coordinates NADP(+).

It belongs to the IMPDH/GMPR family. GuaC type 2 subfamily.

The catalysed reaction is IMP + NH4(+) + NADP(+) = GMP + NADPH + 2 H(+). Catalyzes the irreversible NADPH-dependent deamination of GMP to IMP. It functions in the conversion of nucleobase, nucleoside and nucleotide derivatives of G to A nucleotides, and in maintaining the intracellular balance of A and G nucleotides. The chain is GMP reductase from Lactobacillus delbrueckii subsp. bulgaricus (strain ATCC BAA-365 / Lb-18).